A 338-amino-acid polypeptide reads, in one-letter code: Tryptophan--tRNA ligase (338 aa).

Residues 12–14 and 20–21 contribute to the ATP site; these read QPT and GN. Residues 13 to 21 carry the 'HIGH' region motif; it reads PTGDLHIGN. Asp136 contributes to the L-tryptophan binding site. ATP-binding positions include 148 to 150, Ile191, and 200 to 204; these read GED and KMSKS. A 'KMSKS' region motif is present at residues 200–204; it reads KMSKS.

The protein belongs to the class-I aminoacyl-tRNA synthetase family. As to quaternary structure, homodimer.

Its subcellular location is the cytoplasm. It catalyses the reaction tRNA(Trp) + L-tryptophan + ATP = L-tryptophyl-tRNA(Trp) + AMP + diphosphate + H(+). Catalyzes the attachment of tryptophan to tRNA(Trp). In Prochlorococcus marinus subsp. pastoris (strain CCMP1986 / NIES-2087 / MED4), this protein is Tryptophan--tRNA ligase.